Here is a 2531-residue protein sequence, read N- to C-terminus: Highly reducing polyketide synthase gloL (2531 aa).

Residues 15-435 enclose the Ketosynthase family 3 (KS3) domain; it reads YEPLAIVGMG…GANAHVILDS (421 aa). Active-site for beta-ketoacyl synthase activity residues include Cys187, His322, and His358. The tract at residues 449-525 is disordered; that stretch reads TNGLSVNGHS…GHSVNGHSKP (77 aa). The span at 453 to 503 shows a compositional bias: low complexity; sequence SVNGHSINGNSVNGHSVNGHSTNGHSINGNSVNGHSVNGNSVNGHSTNGHS. Over residues 505 to 521 the composition is skewed to polar residues; it reads NGHSANGNSINGHSVNG. A malonyl-CoA:ACP transacylase (MAT) domain region spans residues 602–909; that stretch reads MVFTGQGAQW…VTALERGKDC (308 aa). An N-terminal hotdog fold region spans residues 971 to 1099; it reads HEILGSRTVE…GQIRSGTDNP (129 aa). The dehydratase (DH) domain stretch occupies residues 971-1251; that stretch reads HEILGSRTVE…GGQFSPIEED (281 aa). The region spanning 971-1254 is the PKS/mFAS DH domain; the sequence is HEILGSRTVE…FSPIEEDSSD (284 aa). The active-site Proton acceptor; for dehydratase activity is His1003. Positions 1109–1254 are C-terminal hotdog fold; the sequence is DHPRSVPSPY…FSPIEEDSSD (146 aa). Catalysis depends on Asp1169, which acts as the Proton donor; for dehydratase activity. Residues 1419–1597 form a methyltransferase (CMet) domain region; sequence DFFTAAGHSK…FSGCDATVYD (179 aa). The interval 1806 to 2114 is enoyl reductase (ER) (ER) domain; sequence GLLQTLRWVP…KGSHIGKIVV (309 aa). A ketoreductase (KR) domain region spans residues 2139–2312; the sequence is GYLLVGGLGG…ASVVDIGVMG (174 aa). Residues 2413-2505 enclose the Carrier domain; the sequence is MSSVETDSSI…ALGLLTIEGL (93 aa). At Ser2464 the chain carries O-(pantetheine 4'-phosphoryl)serine.

The protein operates within mycotoxin biosynthesis. Functionally, highly reducing polyketide synthase; part of the gene cluster that mediates the biosynthesis of pneumocandins, lipohexapeptides of the echinocandin family that prevent fungal cell wall formation by non-competitive inhibition of beta-1,3-glucan synthase. The 10,12-dimethylmyristoyl side chain is synthesized by the reducing polyketide synthase gloL/GLPKS4. The thioesterase gloN/GLHYD exclusively interacts with gloL/GLPKS4 to maintain turnover of the polyketide side chain. The 10R,12S-dimethylmyristic acid is then transferred to the first thiolation domain of the nonribosomal peptide synthetase gloA/GLNRPS4 by the acyl-AMP ligase gloD/GLligase, followed by its acylation to L-ornithine to trigger elongation of the cyclic hexapeptide. L-ornithine, 4R-hydroxyl-L-proline (generated from L-proline by the dioxygenase gloF/GLOXY2), 3S-hydroxyl-L-homotyrosine (generated by gloG/GLHtyB, gloH/GLHtyA, gloI/GLHtyC, gloJ/GLHtyD and hydroxylated at C-3 by the dioxygenase gloM/GLOXY1), 3R-hydroxyl-L-glutamine (generated from L-glutamine probably by the dioxygenase gloE/GLOXY3) and 3S-hydroxyl-L-proline (generated from L-proline by the dioxygenase gloF/GLOXY2 to yield pneumocandin B0), or 3S-hydroxyl-4S-methyl-L-proline (generated from L-leucine by the dioxygenase gloC/GLOXY4 to yield pneumocandin A0) are sequentially added to the growing chain. The last C domain of gloA/GLNRPS4 is proposed to be responsible for cyclization by condensation to form the peptide bond between L-ornithine and 3S-hydroxyl-4S-methyl-L-proline (for pneumocandin A0) or 3S-hydroxyl-L-proline (for pneumocandin B0). Finally, the subsequent C-4 hydroxylation of 3S-hydroxyl-L-homotyrosine and L-ornithine dihydroxylation at C-4 and C-5 are performed by the cytochrome P450 monooxygenases gloP/GLP450-1 and gloO/GLP450-2, respectively. The polypeptide is Highly reducing polyketide synthase gloL (Glarea lozoyensis (strain ATCC 20868 / MF5171)).